The primary structure comprises 708 residues: UvrABC system protein B (708 aa).

The 388-residue stretch at 32 to 419 (EGIQSGKTAQ…GGEVVEQIIR (388 aa)) folds into the Helicase ATP-binding domain. Residue 45–52 (GATGTGKT) participates in ATP binding. The Beta-hairpin signature appears at 98–121 (YYDYYQPEAYIPQRDVYIEKDSSI). The 163-residue stretch at 436–598 (QVTHLLEQVR…IVPKTVRKSI (163 aa)) folds into the Helicase C-terminal domain. A UVR domain is found at 627 to 662 (IEYVDKLEQEMLAAAEDLEFERAARLRDRVLQLKEH). Residues 668-708 (SEVEIVDEKSAGKSGGRGRGRRGAKKKGASKGTKIPRPKRG) form a disordered region. Positions 683 to 708 (GRGRGRRGAKKKGASKGTKIPRPKRG) are enriched in basic residues.

The protein belongs to the UvrB family. In terms of assembly, forms a heterotetramer with UvrA during the search for lesions. Interacts with UvrC in an incision complex.

The protein localises to the cytoplasm. In terms of biological role, the UvrABC repair system catalyzes the recognition and processing of DNA lesions. A damage recognition complex composed of 2 UvrA and 2 UvrB subunits scans DNA for abnormalities. Upon binding of the UvrA(2)B(2) complex to a putative damaged site, the DNA wraps around one UvrB monomer. DNA wrap is dependent on ATP binding by UvrB and probably causes local melting of the DNA helix, facilitating insertion of UvrB beta-hairpin between the DNA strands. Then UvrB probes one DNA strand for the presence of a lesion. If a lesion is found the UvrA subunits dissociate and the UvrB-DNA preincision complex is formed. This complex is subsequently bound by UvrC and the second UvrB is released. If no lesion is found, the DNA wraps around the other UvrB subunit that will check the other stand for damage. This chain is UvrABC system protein B, found in Rhodopirellula baltica (strain DSM 10527 / NCIMB 13988 / SH1).